The following is a 362-amino-acid chain: sn-glycerol-3-phosphate import ATP-binding protein UgpC (362 aa).

The region spanning 4–235 is the ABC transporter domain; sequence LSFRNVKKTY…PASTFVAGFI (232 aa). Residue 37–44 coordinates ATP; that stretch reads GPSGCGKS.

Belongs to the ABC transporter superfamily. sn-glycerol-3-phosphate importer (TC 3.A.1.1.3) family. The complex is composed of two ATP-binding proteins (UgpC), two transmembrane proteins (UgpA and UgpE) and a solute-binding protein (UgpB).

It is found in the cell inner membrane. The catalysed reaction is sn-glycerol 3-phosphate(out) + ATP + H2O = sn-glycerol 3-phosphate(in) + ADP + phosphate + H(+). Its function is as follows. Part of the ABC transporter complex UgpBAEC involved in sn-glycerol-3-phosphate (G3P) import. Responsible for energy coupling to the transport system. This Bordetella pertussis (strain Tohama I / ATCC BAA-589 / NCTC 13251) protein is sn-glycerol-3-phosphate import ATP-binding protein UgpC.